The following is a 265-amino-acid chain: AT-hook motif nuclear-localized protein 18 (265 aa).

Residues M1–P75 form a disordered region. The span at H19–R30 shows a compositional bias: basic residues. Residues R59–K71 constitute a DNA-binding region (a.T hook). The 135-residue stretch at A83–D217 folds into the PPC domain.

It is found in the nucleus. Its function is as follows. Transcription factor that specifically binds AT-rich DNA sequences related to the nuclear matrix attachment regions (MARs). Acts redundantly with AHL22, AHL27 and AHL29 in the regulation of flowering and regulation of the hypocotyl elongation. The sequence is that of AT-hook motif nuclear-localized protein 18 from Arabidopsis thaliana (Mouse-ear cress).